Reading from the N-terminus, the 149-residue chain is Vesicle-associated protein 3-1 (149 aa).

At M1 the chain carries N-acetylmethionine. N-acetylserine; in Vesicle-associated protein 3-1, N-terminally processed is present on S2. The 121-residue stretch at 6–126 (LLEIEPMYLQ…EETKLRVTYV (121 aa)) folds into the MSP domain.

Belongs to the VAMP-associated protein (VAP) (TC 9.B.17) family.

Functionally, may play a role in vesicle trafficking. The chain is Vesicle-associated protein 3-1 (PVA31) from Arabidopsis thaliana (Mouse-ear cress).